Reading from the N-terminus, the 287-residue chain is Acetyl-coenzyme A carboxylase carboxyl transferase subunit beta (287 aa).

The CoA carboxyltransferase N-terminal domain maps to isoleucine 25–lysine 287. Residues cysteine 29, cysteine 32, cysteine 48, and cysteine 51 each coordinate Zn(2+). A C4-type zinc finger spans residues cysteine 29–cysteine 51.

This sequence belongs to the AccD/PCCB family. In terms of assembly, acetyl-CoA carboxylase is a heterohexamer composed of biotin carboxyl carrier protein (AccB), biotin carboxylase (AccC) and two subunits each of ACCase subunit alpha (AccA) and ACCase subunit beta (AccD). Requires Zn(2+) as cofactor.

It is found in the cytoplasm. The enzyme catalyses N(6)-carboxybiotinyl-L-lysyl-[protein] + acetyl-CoA = N(6)-biotinyl-L-lysyl-[protein] + malonyl-CoA. The protein operates within lipid metabolism; malonyl-CoA biosynthesis; malonyl-CoA from acetyl-CoA: step 1/1. Functionally, component of the acetyl coenzyme A carboxylase (ACC) complex. Biotin carboxylase (BC) catalyzes the carboxylation of biotin on its carrier protein (BCCP) and then the CO(2) group is transferred by the transcarboxylase to acetyl-CoA to form malonyl-CoA. This is Acetyl-coenzyme A carboxylase carboxyl transferase subunit beta from Blochmanniella floridana.